Here is a 216-residue protein sequence, read N- to C-terminus: Adenylate kinase (216 aa).

10–15 (GAGKGT) serves as a coordination point for ATP. Residues 30–59 (STGDMLRAAVKAGTELGIKAKSIMDAGGLV) form an NMP region. AMP contacts are provided by residues Thr31, Arg36, 57-59 (GLV), 85-88 (GFPR), and Gln92. The LID stretch occupies residues 122-159 (GRRVHEASGRVYHIVYNPPKIAGKDDITGEELVQRKDD). ATP-binding positions include Arg123 and 132 to 133 (VY). Residues Arg156 and Arg167 each coordinate AMP. Gly202 contacts ATP.

The protein belongs to the adenylate kinase family. As to quaternary structure, monomer.

The protein resides in the cytoplasm. It catalyses the reaction AMP + ATP = 2 ADP. Its pathway is purine metabolism; AMP biosynthesis via salvage pathway; AMP from ADP: step 1/1. Functionally, catalyzes the reversible transfer of the terminal phosphate group between ATP and AMP. Plays an important role in cellular energy homeostasis and in adenine nucleotide metabolism. The protein is Adenylate kinase of Pseudomonas fluorescens (strain Pf0-1).